A 109-amino-acid chain; its full sequence is Transcription initiation factor IIA subunit 2 (109 aa).

The protein belongs to the TFIIA subunit 2 family. In terms of assembly, TFIIA is a heterodimer of the large unprocessed subunit 1 and a small subunit gamma. It was originally believed to be a heterotrimer of an alpha (p35), a beta (p19) and a gamma subunit (p12). Interacts with NCOA6 general coactivator. TFIIA forms a complex with TBP. Interacts with HSF1 (via transactivation domain). Part of TBP-based Pol II pre-initiation complex (PIC), in which Pol II core assembles with general transcription factors and other specific initiation factors including GTF2E1, GTF2E2, GTF2F1, GTF2F2, TCEA1, ERCC2, ERCC3, GTF2H2, GTF2H3, GTF2H4, GTF2H5, GTF2A1, GTF2A2, GTF2B and TBP; this large multi-subunit PIC complex mediates DNA unwinding and targets Pol II core to the transcription start site where the first phosphodiester bond forms. (Microbial infection) Interacts with SV40 Large T antigen.

It localises to the nucleus. In terms of biological role, TFIIA is a component of the transcription machinery of RNA polymerase II and plays an important role in transcriptional activation. TFIIA in a complex with TBP mediates transcriptional activity. This Homo sapiens (Human) protein is Transcription initiation factor IIA subunit 2 (GTF2A2).